A 405-amino-acid polypeptide reads, in one-letter code: Argininosuccinate synthase (405 aa).

11–19 contributes to the ATP binding site; the sequence is AYSGGLDTS. An L-citrulline-binding site is contributed by tyrosine 90. Glycine 119 serves as a coordination point for ATP. Residues threonine 121, asparagine 125, and aspartate 126 each contribute to the L-aspartate site. An L-citrulline-binding site is contributed by asparagine 125. Residues arginine 129, serine 178, serine 187, glutamate 263, and tyrosine 275 each contribute to the L-citrulline site.

Belongs to the argininosuccinate synthase family. Type 1 subfamily. In terms of assembly, homotetramer.

Its subcellular location is the cytoplasm. It carries out the reaction L-citrulline + L-aspartate + ATP = 2-(N(omega)-L-arginino)succinate + AMP + diphosphate + H(+). It functions in the pathway amino-acid biosynthesis; L-arginine biosynthesis; L-arginine from L-ornithine and carbamoyl phosphate: step 2/3. The sequence is that of Argininosuccinate synthase from Legionella pneumophila (strain Corby).